The chain runs to 382 residues: Secreted RxLR effector protein 118 (382 aa).

A signal peptide spans 1–21 (MRGAYYVTIALLVVASSQISA). The RxLR-dEER signature appears at 48–65 (RSLRGSRDVSNDVAIEER). A disordered region spans residues 308 to 382 (MNKASTSKGK…AVTSLSSISN (75 aa)). The segment covering 310-323 (KASTSKGKSSVFTR) has biased composition (polar residues).

The protein belongs to the RxLR effector family.

The protein localises to the secreted. Its subcellular location is the host nucleus. Its function is as follows. Secreted effector that completely suppresses the host cell death induced by cell death-inducing proteins. This is Secreted RxLR effector protein 118 from Plasmopara viticola (Downy mildew of grapevine).